A 691-amino-acid chain; its full sequence is DNA ligase (691 aa).

Residues 53–57 (DSEYD), 102–103 (SL), and E135 contribute to the NAD(+) site. K137 serves as the catalytic N6-AMP-lysine intermediate. NAD(+) contacts are provided by R158, E195, K310, and K334. 4 residues coordinate Zn(2+): C428, C431, C446, and C452. A BRCT domain is found at 613-691 (SEGLPLDGQT…EEEFLVLVGE (79 aa)).

The protein belongs to the NAD-dependent DNA ligase family. LigA subfamily. It depends on Mg(2+) as a cofactor. Mn(2+) is required as a cofactor.

It carries out the reaction NAD(+) + (deoxyribonucleotide)n-3'-hydroxyl + 5'-phospho-(deoxyribonucleotide)m = (deoxyribonucleotide)n+m + AMP + beta-nicotinamide D-nucleotide.. DNA ligase that catalyzes the formation of phosphodiester linkages between 5'-phosphoryl and 3'-hydroxyl groups in double-stranded DNA using NAD as a coenzyme and as the energy source for the reaction. It is essential for DNA replication and repair of damaged DNA. The polypeptide is DNA ligase (Psychrobacter cryohalolentis (strain ATCC BAA-1226 / DSM 17306 / VKM B-2378 / K5)).